The sequence spans 64 residues: DNA gyrase inhibitor YacG (64 aa).

Residues Cys9, Cys12, Cys28, and Cys32 each coordinate Zn(2+). A disordered region spans residues 45–64; sequence KRIPSAGDLSDSDDWSEQQP. The span at 54–64 shows a compositional bias: acidic residues; sequence SDSDDWSEQQP.

It belongs to the DNA gyrase inhibitor YacG family. Interacts with GyrB. It depends on Zn(2+) as a cofactor.

Functionally, inhibits all the catalytic activities of DNA gyrase by preventing its interaction with DNA. Acts by binding directly to the C-terminal domain of GyrB, which probably disrupts DNA binding by the gyrase. In Klebsiella pneumoniae (strain 342), this protein is DNA gyrase inhibitor YacG.